The chain runs to 163 residues: UPF0262 protein RPC_4416 (163 aa).

Belongs to the UPF0262 family.

This is UPF0262 protein RPC_4416 from Rhodopseudomonas palustris (strain BisB18).